The sequence spans 517 residues: 2,3-bisphosphoglycerate-independent phosphoglycerate mutase 1 (517 aa).

Residues aspartate 17 and serine 67 each contribute to the Mn(2+) site. Serine 67 serves as the catalytic Phosphoserine intermediate. Substrate is bound by residues histidine 128, 158–159, arginine 190, arginine 196, 267–270, and lysine 340; these read RD and RPDR. Aspartate 407, histidine 411, aspartate 448, histidine 449, and histidine 467 together coordinate Mn(2+).

Belongs to the BPG-independent phosphoglycerate mutase family. Mn(2+) is required as a cofactor.

It catalyses the reaction (2R)-2-phosphoglycerate = (2R)-3-phosphoglycerate. It participates in carbohydrate degradation; glycolysis; pyruvate from D-glyceraldehyde 3-phosphate: step 3/5. Catalyzes the interconversion of 2-phosphoglycerate and 3-phosphoglycerate. In Methanosarcina barkeri (strain Fusaro / DSM 804), this protein is 2,3-bisphosphoglycerate-independent phosphoglycerate mutase 1.